The primary structure comprises 678 residues: Exoribonuclease 2 (678 aa).

Residues 193–521 form the RNB domain; it reads REDLTALPFV…INHRLLKAHI (329 aa). Residues 568-650 enclose the S1 motif domain; the sequence is ETRFQAEIFD…ENRSLVGKPT (83 aa). The segment at 658–678 is disordered; sequence SETQTSTEQPAEGAENNEPQA.

It belongs to the RNR ribonuclease family. RNase II subfamily.

The protein localises to the cytoplasm. It carries out the reaction Exonucleolytic cleavage in the 3'- to 5'-direction to yield nucleoside 5'-phosphates.. In terms of biological role, involved in mRNA degradation. Hydrolyzes single-stranded polyribonucleotides processively in the 3' to 5' direction. In Vibrio cholerae serotype O1 (strain ATCC 39541 / Classical Ogawa 395 / O395), this protein is Exoribonuclease 2.